A 241-amino-acid polypeptide reads, in one-letter code: Chloride intracellular channel protein 1 (241 aa).

N-acetylalanine is present on alanine 2. The required for insertion into the membrane stretch occupies residues 2-90 (AEEQPQVELF…EEFLEAVLCP (89 aa)). Position 13 is an N6-acetyllysine (lysine 13). Residue cysteine 24 coordinates glutathione. Cysteine 24 carries the S-glutathionyl cysteine; alternate modification. The short motif at 24-27 (CPFS) is the G-site element. The cysteines at positions 24 and 59 are disulfide-linked. Residues 26–46 (FSQRLFMVLWLKGVTFNVTTV) form a helical membrane-spanning segment. Glutathione contacts are provided by leucine 64 and threonine 77. The GST C-terminal domain maps to 93–233 (YPKLAALNPE…PDDEEIELAY (141 aa)). An N6-acetyllysine modification is found at lysine 119. The residue at position 121 (serine 121) is a Phosphoserine. N6-acetyllysine is present on lysine 131. Phosphoserine occurs at positions 156 and 211. Tyrosine 233 carries the post-translational modification Phosphotyrosine.

Belongs to the chloride channel CLIC family. Monomer. Homodimer (in vitro). Interacts with TRAPPC2. Dimerization requires a conformation change that leads to the exposure of a large hydrophobic surface. In vivo, this may lead to membrane insertion. Interacts with AKAP9. Hydrogen peroxide treatment causes a conformation change, leading to dimerization and formation of an intramolecular disulfide bond between Cys-24 and Cys-59. In terms of tissue distribution, expression is prominent in heart, placenta, liver, kidney and pancreas.

It localises to the nucleus. The protein localises to the nucleus membrane. Its subcellular location is the cytoplasm. It is found in the cell membrane. The protein resides in the endoplasmic reticulum. It carries out the reaction L-dehydroascorbate + 2 glutathione = glutathione disulfide + L-ascorbate. The catalysed reaction is chloride(in) = chloride(out). The enzyme catalyses iodide(out) = iodide(in). It catalyses the reaction thiocyanate(in) = thiocyanate(out). It carries out the reaction nitrate(in) = nitrate(out). The catalysed reaction is bromide(in) = bromide(out). The enzyme catalyses fluoride(in) = fluoride(out). Its activity is regulated as follows. The oxidoreductase activity is inhibited by rapamycin, amphotericin B and IAA-94. The channel conductance is regulated by pH and redox membrane potential. Inhibited by IAA-94. In the soluble state, catalyzes glutaredoxin-like thiol disulfide exchange reactions with reduced glutathione as electron donor. Reduces selenite and dehydroascorbate and may act as an antioxidant during oxidative stress response. Can insert into membranes and form voltage-dependent multi-ion conductive channels. Membrane insertion seems to be redox-regulated and may occur only under oxidizing conditions. Involved in regulation of the cell cycle. This chain is Chloride intracellular channel protein 1, found in Homo sapiens (Human).